Here is a 334-residue protein sequence, read N- to C-terminus: Aspartate carbamoyltransferase catalytic subunit (334 aa).

Carbamoyl phosphate contacts are provided by Arg70 and Thr71. An L-aspartate-binding site is contributed by Lys98. Residues Arg120, His150, and Gln153 each contribute to the carbamoyl phosphate site. L-aspartate-binding residues include Arg183 and Arg238. Carbamoyl phosphate-binding residues include Gly279 and Pro280.

Belongs to the aspartate/ornithine carbamoyltransferase superfamily. ATCase family. In terms of assembly, heterododecamer (2C3:3R2) of six catalytic PyrB chains organized as two trimers (C3), and six regulatory PyrI chains organized as three dimers (R2).

The enzyme catalyses carbamoyl phosphate + L-aspartate = N-carbamoyl-L-aspartate + phosphate + H(+). It participates in pyrimidine metabolism; UMP biosynthesis via de novo pathway; (S)-dihydroorotate from bicarbonate: step 2/3. Catalyzes the condensation of carbamoyl phosphate and aspartate to form carbamoyl aspartate and inorganic phosphate, the committed step in the de novo pyrimidine nucleotide biosynthesis pathway. In Marinomonas sp. (strain MWYL1), this protein is Aspartate carbamoyltransferase catalytic subunit.